The following is a 756-amino-acid chain: Protein psiP (756 aa).

The signal sequence occupies residues 1–23 (MFIQRTFLKVLTLLSIVTVLVHG). Over 24 to 692 (QTQPKDKITL…NCNTGAVVST (669 aa)) the chain is Extracellular. An N-linked (GlcNAc...) asparagine glycan is attached at N82. Residues 126–281 (LNWNGEAYEY…VDYCGVCEGD (156 aa)) form the PA14 domain. Residues N359, N483, N564, and N663 are each glycosylated (N-linked (GlcNAc...) asparagine). Residues 693 to 713 (AVIAGSTVAGAVALGIFLYGG) traverse the membrane as a helical segment. Over 714-756 (KKGYDYWKDSRNISMGSSNSNPLYEEQQTGRGVNPMYDDPAAN) the chain is Cytoplasmic. Positions 730-744 (SSNSNPLYEEQQTGR) are enriched in polar residues. The disordered stretch occupies residues 730-756 (SSNSNPLYEEQQTGRGVNPMYDDPAAN).

The protein belongs to the prespore-cell-inducing factor family.

It is found in the membrane. This chain is Protein psiP (psiP), found in Dictyostelium discoideum (Social amoeba).